The following is a 245-amino-acid chain: 5'-nucleotidase SurE (245 aa).

A divalent metal cation is bound by residues Asp-8, Asp-9, Ser-39, and Asn-91.

This sequence belongs to the SurE nucleotidase family. The cofactor is a divalent metal cation.

The protein localises to the cytoplasm. The enzyme catalyses a ribonucleoside 5'-phosphate + H2O = a ribonucleoside + phosphate. Its function is as follows. Nucleotidase that shows phosphatase activity on nucleoside 5'-monophosphates. In Herminiimonas arsenicoxydans, this protein is 5'-nucleotidase SurE.